Reading from the N-terminus, the 142-residue chain is Sorting nexin-3 (142 aa).

The 118-residue stretch at 21–138 (NFLEIEVRNP…AAFVQDPNWD (118 aa)) folds into the PX domain. The a 1,2-diacyl-sn-glycero-3-phospho-(1D-myo-inositol-3-phosphate) site is built by Arg64, Ser66, Lys90, Arg95, and Arg104.

This sequence belongs to the sorting nexin family.

It is found in the cytoplasm. Its subcellular location is the golgi apparatus membrane. The protein resides in the prevacuolar compartment membrane. Its function is as follows. Required for retention of late Golgi membrane proteins. Component of the retrieval machinery that functions by direct interaction with the cytosolic tails of certain TGN membrane proteins during the sorting/budding process at the prevacuolar compartment. Binds phosphatidylinositol 3-phosphate (PtdIns(P3)). In Neurospora crassa (strain ATCC 24698 / 74-OR23-1A / CBS 708.71 / DSM 1257 / FGSC 987), this protein is Sorting nexin-3 (snx-3).